The sequence spans 80 residues: Exodeoxyribonuclease 7 small subunit (80 aa).

This sequence belongs to the XseB family. As to quaternary structure, heterooligomer composed of large and small subunits.

It is found in the cytoplasm. It carries out the reaction Exonucleolytic cleavage in either 5'- to 3'- or 3'- to 5'-direction to yield nucleoside 5'-phosphates.. Its function is as follows. Bidirectionally degrades single-stranded DNA into large acid-insoluble oligonucleotides, which are then degraded further into small acid-soluble oligonucleotides. The chain is Exodeoxyribonuclease 7 small subunit from Cronobacter sakazakii (strain ATCC BAA-894) (Enterobacter sakazakii).